We begin with the raw amino-acid sequence, 273 residues long: MSTIRPVFYVSDGTGITAETIGHSLLTQFSGFTFVAERMVFIDDAEKARDASQRILAASERYRVRPIVVNSCVNPYLSVILAESGALMLDVFAPFIGLLEHELNTSRHSCVGRAHGMVDFETYHRRINAMNFALAHDDGVAASYDEAEVILVAVSRAGKTPTCIYLALHYGIRAANYPLIDEDLNSDQLPLRLRPYRKKLFGLTINPERLQQIRQERRPNSRYAALDTCKREVAAAEQMFSAERITTLSTTHTSIEEISSKVLVTLGLQREMF.

153-160 (AVSRAGKT) contributes to the ADP binding site.

The protein belongs to the pyruvate, phosphate/water dikinase regulatory protein family. PSRP subfamily.

It carries out the reaction [pyruvate, water dikinase] + ADP = [pyruvate, water dikinase]-phosphate + AMP + H(+). The catalysed reaction is [pyruvate, water dikinase]-phosphate + phosphate + H(+) = [pyruvate, water dikinase] + diphosphate. Its function is as follows. Bifunctional serine/threonine kinase and phosphorylase involved in the regulation of the phosphoenolpyruvate synthase (PEPS) by catalyzing its phosphorylation/dephosphorylation. The sequence is that of Putative phosphoenolpyruvate synthase regulatory protein from Xylella fastidiosa (strain M23).